The following is a 143-amino-acid chain: Large ribosomal subunit protein uL11 (143 aa).

This sequence belongs to the universal ribosomal protein uL11 family. As to quaternary structure, part of the ribosomal stalk of the 50S ribosomal subunit. Interacts with L10 and the large rRNA to form the base of the stalk. L10 forms an elongated spine to which L12 dimers bind in a sequential fashion forming a multimeric L10(L12)X complex. In terms of processing, one or more lysine residues are methylated.

In terms of biological role, forms part of the ribosomal stalk which helps the ribosome interact with GTP-bound translation factors. In Phenylobacterium zucineum (strain HLK1), this protein is Large ribosomal subunit protein uL11.